Consider the following 306-residue polypeptide: MARTEGDTWDLGSSVGATATSVAANRAFASRSTAGGPEPLLNDPYADLLVEAVGLPHFIRVARGEIDFDDDPLFGARQMLEQITVRTRHFDDFFAGAMAAGPPKIRQAVILASGLDTRAYRLPWPAGTVVYEIDQPTVIEFKTAVLADAGVAPTAERRTVGIDLREDWPAALRGAGFDPTRPTAWIAEGLLIYLPPDAQDRLLDHITALSAPGSRLATEHMDAKALTGEWARAMTERARRHGSDVNLSELFYSGPRTSATEHLRAQGWQTEVLSSNDAYQAQGFAPVADHLVAMIGDSGYLTARLD.

S-adenosyl-L-methionine is bound by residues aspartate 134 and 163–164 (DL).

The protein belongs to the UPF0677 family.

Its function is as follows. Exhibits S-adenosyl-L-methionine-dependent methyltransferase activity. This Mycolicibacterium vanbaalenii (strain DSM 7251 / JCM 13017 / BCRC 16820 / KCTC 9966 / NRRL B-24157 / PYR-1) (Mycobacterium vanbaalenii) protein is Putative S-adenosyl-L-methionine-dependent methyltransferase Mvan_1345.